A 123-amino-acid chain; its full sequence is Small ribosomal subunit protein uS12 (123 aa).

The interval Met1–Gln25 is disordered. The segment covering Ile8–Ser21 has biased composition (basic residues). The residue at position 89 (Asp89) is a 3-methylthioaspartic acid.

This sequence belongs to the universal ribosomal protein uS12 family. Part of the 30S ribosomal subunit. Contacts proteins S8 and S17. May interact with IF1 in the 30S initiation complex.

Functionally, with S4 and S5 plays an important role in translational accuracy. In terms of biological role, interacts with and stabilizes bases of the 16S rRNA that are involved in tRNA selection in the A site and with the mRNA backbone. Located at the interface of the 30S and 50S subunits, it traverses the body of the 30S subunit contacting proteins on the other side and probably holding the rRNA structure together. The combined cluster of proteins S8, S12 and S17 appears to hold together the shoulder and platform of the 30S subunit. This Chlamydia pneumoniae (Chlamydophila pneumoniae) protein is Small ribosomal subunit protein uS12.